Consider the following 200-residue polypeptide: 3-isopropylmalate dehydratase small subunit (200 aa).

It belongs to the LeuD family. LeuD type 1 subfamily. Heterodimer of LeuC and LeuD.

It carries out the reaction (2R,3S)-3-isopropylmalate = (2S)-2-isopropylmalate. The protein operates within amino-acid biosynthesis; L-leucine biosynthesis; L-leucine from 3-methyl-2-oxobutanoate: step 2/4. Catalyzes the isomerization between 2-isopropylmalate and 3-isopropylmalate, via the formation of 2-isopropylmaleate. This is 3-isopropylmalate dehydratase small subunit from Actinobacillus pleuropneumoniae serotype 7 (strain AP76).